We begin with the raw amino-acid sequence, 742 residues long: Collectin-12 (742 aa).

At 1–37 (MKDDFAEEEEVQSFGYKRFGIQEGTQCTKCKNNWALK) the chain is on the cytoplasmic side. Residues 38-58 (FSIILLYILCALLTITVAILG) traverse the membrane as a helical; Signal-anchor for type II membrane protein segment. The Extracellular portion of the chain corresponds to 59–742 (YKVVEKMDNV…DRETVLSSAL (684 aa)). Asn67 carries an N-linked (GlcNAc...) asparagine glycan. Residues 73–141 (ETSRQTYDDK…NKDTLEKLQA (69 aa)) are a coiled coil. Asn159, Asn168, and Asn271 each carry an N-linked (GlcNAc...) asparagine glycan. Positions 215 to 328 (QQRNLITNLQ…KDAENRTAIK (114 aa)) form a coiled coil. The interval 439-608 (TILQGPPGPR…TPAPEDNGCP (170 aa)) is disordered. Collagen-like domains follow at residues 443-472 (GPPG…KGEK), 473-529 (GEPG…PGPP), and 530-589 (GPPG…SGAV). Low complexity-rich tracts occupy residues 502–525 (KGSQ…SSGD) and 534–556 (KEGL…VGEP). Residues 571–585 (PGMPGPKGPPGPPGP) are compositionally biased toward pro residues. Intrachain disulfides connect Cys607/Cys618, Cys635/Cys730, and Cys708/Cys722. The C-type lectin domain maps to 614 to 731 (FTDKCYYFSV…CEDVNNFICE (118 aa)). The Ca(2+) site is built by Phe644, Asn646, Glu650, Asp670, and Glu674. A carbohydrate contacts are provided by Lys691, Gln694, and Asp696. Residues Gln694, Asp696, Asn697, Glu706, Asp707, Asn718, Asp719, and Glu731 each coordinate Ca(2+). Glu706 provides a ligand contact to a carbohydrate. A carbohydrate-binding residues include Asn718 and Asp719.

The extracellular domain forms a stable trimer. The extracellular domain interacts with fibrillar amyloid-beta peptide. Expressed in perivascular macrophages. Expressed in plaques-surrounding reactive astrocytes and in perivascular astrocytes associated with cerebral amyloid angiopathy (CAA) in the temporal cortex of Alzheimer patient (at protein level). Strongly expressed in placenta. Moderately expressed in heart, skeletal muscle, small intestine and lung. Weakly expressed in brain, colon, thymus and kidney. Expressed in nurse-like cells. Expressed in reactive astrocytes and vascular/perivascular cells in the brain of Alzheimer patient.

Its subcellular location is the membrane. Its function is as follows. Scavenger receptor that displays several functions associated with host defense. Promotes binding and phagocytosis of Gram-positive, Gram-negative bacteria and yeast. Mediates the recognition, internalization and degradation of oxidatively modified low density lipoprotein (oxLDL) by vascular endothelial cells. Binds to several carbohydrates including Gal-type ligands, D-galactose, L- and D-fucose, GalNAc, T and Tn antigens in a calcium-dependent manner and internalizes specifically GalNAc in nurse-like cells. Also binds to sialyl Lewis X or a trisaccharide and asialo-orosomucoid (ASOR). May also play a role in the clearance of amyloid-beta in Alzheimer disease. The sequence is that of Collectin-12 (COLEC12) from Homo sapiens (Human).